We begin with the raw amino-acid sequence, 274 residues long: tRNA pseudouridine synthase A (274 aa).

Aspartate 51 (nucleophile) is an active-site residue. Position 109 (tyrosine 109) interacts with substrate.

This sequence belongs to the tRNA pseudouridine synthase TruA family. In terms of assembly, homodimer.

It catalyses the reaction uridine(38/39/40) in tRNA = pseudouridine(38/39/40) in tRNA. Functionally, formation of pseudouridine at positions 38, 39 and 40 in the anticodon stem and loop of transfer RNAs. The polypeptide is tRNA pseudouridine synthase A (Acidovorax ebreus (strain TPSY) (Diaphorobacter sp. (strain TPSY))).